A 101-amino-acid polypeptide reads, in one-letter code: Small ribosomal subunit protein uS14 (101 aa).

This sequence belongs to the universal ribosomal protein uS14 family. As to quaternary structure, part of the 30S ribosomal subunit. Contacts proteins S3 and S10.

Functionally, binds 16S rRNA, required for the assembly of 30S particles and may also be responsible for determining the conformation of the 16S rRNA at the A site. This Albidiferax ferrireducens (strain ATCC BAA-621 / DSM 15236 / T118) (Rhodoferax ferrireducens) protein is Small ribosomal subunit protein uS14.